A 252-amino-acid polypeptide reads, in one-letter code: Outer membrane protein P1 (252 aa).

An N-terminal signal peptide occupies residues 1 to 23; it reads METTTKLAIGVSALCCLASAAFA.

It belongs to the Coxiella porin P1 (CPP1) (TC 1.B.43) family. In terms of assembly, may form trimers.

It localises to the cell outer membrane. Its function is as follows. Able to form a pore in lipid bilayers. In Coxiella burnetii (strain RSA 493 / Nine Mile phase I), this protein is Outer membrane protein P1 (ompP1).